Consider the following 136-residue polypeptide: Aspartate 1-decarboxylase (136 aa).

Ser-25 functions as the Schiff-base intermediate with substrate; via pyruvic acid in the catalytic mechanism. The residue at position 25 (Ser-25) is a Pyruvic acid (Ser). Thr-57 contacts substrate. Tyr-58 acts as the Proton donor in catalysis. Residue 73 to 75 (GAA) participates in substrate binding.

It belongs to the PanD family. In terms of assembly, heterooctamer of four alpha and four beta subunits. Pyruvate is required as a cofactor. Post-translationally, is synthesized initially as an inactive proenzyme, which is activated by self-cleavage at a specific serine bond to produce a beta-subunit with a hydroxyl group at its C-terminus and an alpha-subunit with a pyruvoyl group at its N-terminus.

Its subcellular location is the cytoplasm. The catalysed reaction is L-aspartate + H(+) = beta-alanine + CO2. It functions in the pathway cofactor biosynthesis; (R)-pantothenate biosynthesis; beta-alanine from L-aspartate: step 1/1. Functionally, catalyzes the pyruvoyl-dependent decarboxylation of aspartate to produce beta-alanine. This is Aspartate 1-decarboxylase from Mycolicibacterium smegmatis (strain ATCC 700084 / mc(2)155) (Mycobacterium smegmatis).